The following is a 257-amino-acid chain: Type III pantothenate kinase (257 aa).

6–13 contacts ATP; that stretch reads DCGNTNTV. Position 107 to 110 (107 to 110) interacts with substrate; it reads GPDR. The Proton acceptor role is filled by Asp109. Position 129 (Asp129) interacts with K(+). An ATP-binding site is contributed by Thr132. Substrate is bound at residue Thr184.

It belongs to the type III pantothenate kinase family. Homodimer. NH4(+) is required as a cofactor. K(+) serves as cofactor.

It localises to the cytoplasm. It catalyses the reaction (R)-pantothenate + ATP = (R)-4'-phosphopantothenate + ADP + H(+). Its pathway is cofactor biosynthesis; coenzyme A biosynthesis; CoA from (R)-pantothenate: step 1/5. Functionally, catalyzes the phosphorylation of pantothenate (Pan), the first step in CoA biosynthesis. The protein is Type III pantothenate kinase of Cereibacter sphaeroides (strain ATCC 17029 / ATH 2.4.9) (Rhodobacter sphaeroides).